The primary structure comprises 156 residues: Small ribosomal subunit protein uS7c (156 aa).

Belongs to the universal ribosomal protein uS7 family. In terms of assembly, part of the 30S ribosomal subunit.

The protein localises to the plastid. It is found in the chloroplast. In terms of biological role, one of the primary rRNA binding proteins, it binds directly to 16S rRNA where it nucleates assembly of the head domain of the 30S subunit. This Thalassiosira pseudonana (Marine diatom) protein is Small ribosomal subunit protein uS7c (rps7).